The primary structure comprises 184 residues: Isopentenyl-diphosphate Delta-isomerase (184 aa).

Residues histidine 25 and histidine 32 each contribute to the Mn(2+) site. Residues 30 to 164 form the Nudix hydrolase domain; the sequence is PLHLAFSCWL…PWAFSPWMVL (135 aa). The active site involves cysteine 67. Histidine 69 is a binding site for Mn(2+). Residue glutamate 87 coordinates Mg(2+). Residues glutamate 114 and glutamate 116 each contribute to the Mn(2+) site. The active site involves glutamate 116.

The protein belongs to the IPP isomerase type 1 family. As to quaternary structure, homodimer. Requires Mg(2+) as cofactor. The cofactor is Mn(2+).

The protein localises to the cytoplasm. It catalyses the reaction isopentenyl diphosphate = dimethylallyl diphosphate. It participates in isoprenoid biosynthesis; dimethylallyl diphosphate biosynthesis; dimethylallyl diphosphate from isopentenyl diphosphate: step 1/1. Catalyzes the 1,3-allylic rearrangement of the homoallylic substrate isopentenyl (IPP) to its highly electrophilic allylic isomer, dimethylallyl diphosphate (DMAPP). This is Isopentenyl-diphosphate Delta-isomerase from Klebsiella pneumoniae (strain 342).